Here is a 481-residue protein sequence, read N- to C-terminus: Glutamate--tRNA ligase (481 aa).

A 'HIGH' region motif is present at residues 9–19 (PSPTGNLHIGT). Zn(2+)-binding residues include Cys-98, Cys-100, His-125, and Asp-127. The 'KMSKS' region motif lies at 248–252 (KLSKR). Lys-251 serves as a coordination point for ATP.

This sequence belongs to the class-I aminoacyl-tRNA synthetase family. Glutamate--tRNA ligase type 1 subfamily. As to quaternary structure, monomer. Zn(2+) is required as a cofactor.

It localises to the cytoplasm. It carries out the reaction tRNA(Glu) + L-glutamate + ATP = L-glutamyl-tRNA(Glu) + AMP + diphosphate. In terms of biological role, catalyzes the attachment of glutamate to tRNA(Glu) in a two-step reaction: glutamate is first activated by ATP to form Glu-AMP and then transferred to the acceptor end of tRNA(Glu). The polypeptide is Glutamate--tRNA ligase (Synechococcus elongatus (strain ATCC 33912 / PCC 7942 / FACHB-805) (Anacystis nidulans R2)).